A 350-amino-acid chain; its full sequence is Glycerol-3-phosphate dehydrogenase [NAD(+)], cytoplasmic (350 aa).

NAD(+)-binding positions include 11-16, F98, K121, and A155; that span reads GSGNWG. K121 contacts substrate. The active-site Proton acceptor is the K206. NAD(+)-binding residues include R270 and Q299. Residue 270–271 coordinates substrate; the sequence is RN.

It belongs to the NAD-dependent glycerol-3-phosphate dehydrogenase family. As to quaternary structure, homodimer.

It localises to the cytoplasm. The enzyme catalyses sn-glycerol 3-phosphate + NAD(+) = dihydroxyacetone phosphate + NADH + H(+). The protein operates within phospholipid metabolism; alpha-glycerophosphate cycle. The polypeptide is Glycerol-3-phosphate dehydrogenase [NAD(+)], cytoplasmic (Gpdh1) (Drosophila ezoana (Fruit fly)).